Consider the following 398-residue polypeptide: Na(+)/H(+) antiporter NhaA (398 aa).

The next 12 membrane-spanning stretches (helical) occupy residues 21-41 (AGGIILMVAAALALIVANSPL), 56-76 (LSVSHWVNDGLMAVFFLLVGL), 94-114 (VLPGIAAAGGMLVPALVYVFI), 124-144 (GWAIPTATDIAFALGVLSLLG), 153-173 (VFLTALAIIDDLGAVIIIAIF), 176-196 (SGLSLAYLGAAFAVIAALVVL), 201-221 (VMTLLPYLVLGAILWVLVLKS), 263-283 (IVPFFVIPIFGFANAGVSLAG), 284-304 (LSLGALIEPLTLGVAAGLVVG), 306-326 (LVGVFGSSALAIRLGLADLPA), 333-353 (MIGISLLCGIGFTMSLFIGLL), and 367-387 (VGILAGSFVAAILGAAVLLMA).

Belongs to the NhaA Na(+)/H(+) (TC 2.A.33) antiporter family.

It localises to the cell inner membrane. The catalysed reaction is Na(+)(in) + 2 H(+)(out) = Na(+)(out) + 2 H(+)(in). In terms of biological role, na(+)/H(+) antiporter that extrudes sodium in exchange for external protons. This is Na(+)/H(+) antiporter NhaA from Mesorhizobium japonicum (strain LMG 29417 / CECT 9101 / MAFF 303099) (Mesorhizobium loti (strain MAFF 303099)).